The following is a 279-amino-acid chain: 4-diphosphocytidyl-2-C-methyl-D-erythritol kinase (279 aa).

Lysine 9 is an active-site residue. Residue 92–102 (PLAAGLGGGSS) participates in ATP binding. Aspartate 134 is a catalytic residue.

The protein belongs to the GHMP kinase family. IspE subfamily.

It carries out the reaction 4-CDP-2-C-methyl-D-erythritol + ATP = 4-CDP-2-C-methyl-D-erythritol 2-phosphate + ADP + H(+). The protein operates within isoprenoid biosynthesis; isopentenyl diphosphate biosynthesis via DXP pathway; isopentenyl diphosphate from 1-deoxy-D-xylulose 5-phosphate: step 3/6. Catalyzes the phosphorylation of the position 2 hydroxy group of 4-diphosphocytidyl-2C-methyl-D-erythritol. The protein is 4-diphosphocytidyl-2-C-methyl-D-erythritol kinase of Syntrophus aciditrophicus (strain SB).